Here is a 303-residue protein sequence, read N- to C-terminus: MNRIALVFLYSLFLFNLAIGRVESQTCQCIQPDPSMLNCLGYDSKLQADTIDEAIASFPDLSLNDDVANQKFSTADVGCVTKECQDCRKDMRKQLQKVGLLAKDINDIVASQVDSNSTCTKYGFTRQQQKKSHDDDDDDDDSDSDESKEEEEKKKRDRKHRRDKRQAITQGSQNNTDPNLIGTRFTISCAMKGVSVDPTGTVSLCSSCWVWRQLPSNYRPQYINELVCDNTDSDCLSGYATCSVGHRTFEAIRNDNGVQTQVTLTAGSYCECRISKSSSLQSLVEGTGISGTYNPLSNHTTPV.

A signal peptide spans 1 to 24; sequence MNRIALVFLYSLFLFNLAIGRVES. N116 carries an N-linked (GlcNAc...) asparagine glycan. The disordered stretch occupies residues 124 to 179; sequence FTRQQQKKSHDDDDDDDDSDSDESKEEEEKKKRDRKHRRDKRQAITQGSQNNTDPN. A compositionally biased stretch (acidic residues) spans 135–149; it reads DDDDDDDSDSDESKE. Residues 155 to 164 show a composition bias toward basic residues; the sequence is KRDRKHRRDK. A compositionally biased stretch (polar residues) spans 167-178; the sequence is AITQGSQNNTDP.

This is an uncharacterized protein from Caenorhabditis elegans.